Reading from the N-terminus, the 286-residue chain is Diaminopimelate epimerase (286 aa).

Substrate contacts are provided by asparagine 22, glutamine 56, and asparagine 76. The active-site Proton donor is cysteine 85. Residues 86-87 (GN), asparagine 169, asparagine 202, and 220-221 (ER) contribute to the substrate site. Cysteine 229 functions as the Proton acceptor in the catalytic mechanism. 230 to 231 (GS) lines the substrate pocket.

This sequence belongs to the diaminopimelate epimerase family. As to quaternary structure, homodimer.

The protein localises to the cytoplasm. It catalyses the reaction (2S,6S)-2,6-diaminopimelate = meso-2,6-diaminopimelate. It functions in the pathway amino-acid biosynthesis; L-lysine biosynthesis via DAP pathway; DL-2,6-diaminopimelate from LL-2,6-diaminopimelate: step 1/1. In terms of biological role, catalyzes the stereoinversion of LL-2,6-diaminopimelate (L,L-DAP) to meso-diaminopimelate (meso-DAP), a precursor of L-lysine and an essential component of the bacterial peptidoglycan. The sequence is that of Diaminopimelate epimerase from Buchnera aphidicola subsp. Baizongia pistaciae (strain Bp).